Consider the following 254-residue polypeptide: UPF0328 protein ECU01_0070/ECU01_1540/ECU02_1570/ECU04_0080/ECU08_2100 (254 aa).

Belongs to the UPF0328 family.

This chain is UPF0328 protein ECU01_0070/ECU01_1540/ECU02_1570/ECU04_0080/ECU08_2100, found in Encephalitozoon cuniculi (strain GB-M1) (Microsporidian parasite).